The primary structure comprises 82 residues: Large ribosomal subunit protein uL23 (82 aa).

The protein belongs to the universal ribosomal protein uL23 family. In terms of assembly, part of the 50S ribosomal subunit. Contacts protein L29.

Its function is as follows. Binds to 23S rRNA. One of the proteins that surrounds the polypeptide exit tunnel on the outside of the ribosome. The protein is Large ribosomal subunit protein uL23 of Methanosarcina acetivorans (strain ATCC 35395 / DSM 2834 / JCM 12185 / C2A).